Here is a 215-residue protein sequence, read N- to C-terminus: Probable phosphoglycerate mutase GpmB (215 aa).

Residues 8-15, 21-22, Arg-58, Arg-60, 82-85, 104-105, and 151-152 contribute to the substrate site; these read RHGETQWN, QG, ELNM, RR, and GI. His-9 (tele-phosphohistidine intermediate) is an active-site residue. The active-site Proton donor/acceptor is Glu-82.

Belongs to the phosphoglycerate mutase family. GpmB subfamily.

The enzyme catalyses (2R)-2-phosphoglycerate = (2R)-3-phosphoglycerate. Its pathway is carbohydrate degradation; glycolysis; pyruvate from D-glyceraldehyde 3-phosphate: step 3/5. This Escherichia coli O9:H4 (strain HS) protein is Probable phosphoglycerate mutase GpmB.